We begin with the raw amino-acid sequence, 306 residues long: ATP phosphoribosyltransferase (306 aa).

The protein belongs to the ATP phosphoribosyltransferase family.

It is found in the cytoplasm. The catalysed reaction is 1-(5-phospho-beta-D-ribosyl)-ATP + diphosphate = 5-phospho-alpha-D-ribose 1-diphosphate + ATP. It participates in amino-acid biosynthesis; L-histidine biosynthesis; L-histidine from 5-phospho-alpha-D-ribose 1-diphosphate: step 1/9. Functionally, catalyzes the condensation of ATP and 5-phosphoribose 1-diphosphate to form N'-(5'-phosphoribosyl)-ATP (PR-ATP). Has a crucial role in the pathway because the rate of histidine biosynthesis seems to be controlled primarily by regulation of the enzymatic activity. This is ATP phosphoribosyltransferase (HIS1) from Candida glabrata (strain ATCC 2001 / BCRC 20586 / JCM 3761 / NBRC 0622 / NRRL Y-65 / CBS 138) (Yeast).